The sequence spans 444 residues: Glutamyl-tRNA reductase (444 aa).

Substrate is bound by residues 49-52 (TCNR), S117, 122-124 (EPQ), and Q128. The Nucleophile role is filled by C50. 202 to 207 (GAGETI) lines the NADP(+) pocket.

Belongs to the glutamyl-tRNA reductase family. In terms of assembly, homodimer.

It catalyses the reaction (S)-4-amino-5-oxopentanoate + tRNA(Glu) + NADP(+) = L-glutamyl-tRNA(Glu) + NADPH + H(+). It participates in porphyrin-containing compound metabolism; protoporphyrin-IX biosynthesis; 5-aminolevulinate from L-glutamyl-tRNA(Glu): step 1/2. In terms of biological role, catalyzes the NADPH-dependent reduction of glutamyl-tRNA(Glu) to glutamate 1-semialdehyde (GSA). This is Glutamyl-tRNA reductase from Mannheimia succiniciproducens (strain KCTC 0769BP / MBEL55E).